A 341-amino-acid chain; its full sequence is Adenosine deaminase (341 aa).

His-15 and His-17 together coordinate Zn(2+). Substrate contacts are provided by His-17, Asp-19, and Gly-172. His-199 is a binding site for Zn(2+). Glu-202 (proton donor) is an active-site residue. Asp-279 provides a ligand contact to Zn(2+).

It belongs to the metallo-dependent hydrolases superfamily. Adenosine and AMP deaminases family. Adenosine deaminase subfamily. Zn(2+) is required as a cofactor.

The catalysed reaction is adenosine + H2O + H(+) = inosine + NH4(+). It carries out the reaction 2'-deoxyadenosine + H2O + H(+) = 2'-deoxyinosine + NH4(+). Functionally, catalyzes the hydrolytic deamination of adenosine and 2-deoxyadenosine. This chain is Adenosine deaminase, found in Streptococcus equi subsp. zooepidemicus (strain MGCS10565).